The primary structure comprises 223 residues: Transcriptional regulator HMO1 (223 aa).

Disordered regions lie at residues 69–89 (IEAT…APKK) and 165–223 (DGSA…HGSP). Positions 70–86 (EATESKKKRKQEKDPNA) are enriched in basic and acidic residues. The segment at residues 87–160 (PKKPLTMFFQ…IYNIEKKKYE (74 aa)) is a DNA-binding region (HMG box). Residues 204 to 223 (KKKKKTEKKEKKKKSGHGSP) are compositionally biased toward basic residues.

Its subcellular location is the nucleus. Its function is as follows. Transcription factor that binds upstream of hexose and ergosterol metabolism, as well as cell cycle genes. Activates pseudohyphal growth. The chain is Transcriptional regulator HMO1 (HMO1) from Candida albicans (strain SC5314 / ATCC MYA-2876) (Yeast).